Here is a 931-residue protein sequence, read N- to C-terminus: Histone-lysine N-methyltransferase EZ1 (931 aa).

The segment covering 1 to 30 (MEAEAAAAVVASSASASASAGRSRPSSSAA) has biased composition (low complexity). Disordered regions lie at residues 1 to 37 (MEAE…SNSA), 372 to 450 (PTHS…ITNR), and 491 to 549 (RNGN…YDSS). Positions 375–385 (SSDNVMNQPGS) are enriched in polar residues. Positions 386-398 (NRKKNGSSGRKTK) are enriched in basic residues. The segment covering 423 to 433 (SNKSPQHSPSP) has biased composition (polar residues). Positions 500–509 (SSQQSSPSTR) are enriched in low complexity. Positions 528–549 (AHNDSTEEANNRHSATDGYDSS) are enriched in basic and acidic residues. Residues 565–615 (YLRSWKAIEQGLLVKGLEIFGRNSCLIARNLLGGMKTCKDVFQYMNYIENN) enclose the SANT domain. In terms of domain architecture, CXC spans 664–763 (FKRITERKDQ…TLGVPNQRGD (100 aa)). The SET domain maps to 778–893 (QRVLLGRSDV…AGEELFYDYR (116 aa)). The span at 903–915 (ARKPEASGAKDDG) shows a compositional bias: basic and acidic residues. Residues 903–931 (ARKPEASGAKDDGQPFNGRAKKLAQNNRG) form a disordered region.

Belongs to the class V-like SAM-binding methyltransferase superfamily. Histone-lysine methyltransferase family. EZ subfamily. In terms of tissue distribution, widely expressed.

It localises to the nucleus. The catalysed reaction is L-lysyl(27)-[histone H3] + 3 S-adenosyl-L-methionine = N(6),N(6),N(6)-trimethyl-L-lysyl(27)-[histone H3] + 3 S-adenosyl-L-homocysteine + 3 H(+). Its function is as follows. Polycomb group (PcG) protein. Catalytic subunit of some PcG multiprotein complex, which methylates 'Lys-27' of histone H3, leading to transcriptional repression of the affected target genes. PcG proteins are not required to initiate repression, but to maintain it during later stages of development. This chain is Histone-lysine N-methyltransferase EZ1 (EZ1), found in Zea mays (Maize).